The following is a 188-amino-acid chain: Threonylcarbamoyl-AMP synthase (188 aa).

In terms of domain architecture, YrdC-like spans 3-188 (QLHPSDIKDI…RSGKILRNGQ (186 aa)).

It belongs to the SUA5 family. TsaC subfamily.

The protein resides in the cytoplasm. It catalyses the reaction L-threonine + hydrogencarbonate + ATP = L-threonylcarbamoyladenylate + diphosphate + H2O. Required for the formation of a threonylcarbamoyl group on adenosine at position 37 (t(6)A37) in tRNAs that read codons beginning with adenine. Catalyzes the conversion of L-threonine, HCO(3)(-)/CO(2) and ATP to give threonylcarbamoyl-AMP (TC-AMP) as the acyladenylate intermediate, with the release of diphosphate. This chain is Threonylcarbamoyl-AMP synthase, found in Shewanella baltica (strain OS195).